A 238-amino-acid polypeptide reads, in one-letter code: Ribosomal RNA small subunit methyltransferase E 1 (238 aa).

It belongs to the RNA methyltransferase RsmE family.

The protein localises to the cytoplasm. The enzyme catalyses uridine(1498) in 16S rRNA + S-adenosyl-L-methionine = N(3)-methyluridine(1498) in 16S rRNA + S-adenosyl-L-homocysteine + H(+). Functionally, specifically methylates the N3 position of the uracil ring of uridine 1498 (m3U1498) in 16S rRNA. Acts on the fully assembled 30S ribosomal subunit. This Borreliella burgdorferi (strain ATCC 35210 / DSM 4680 / CIP 102532 / B31) (Borrelia burgdorferi) protein is Ribosomal RNA small subunit methyltransferase E 1 (rsmE1).